The following is a 202-amino-acid chain: Snake venom metalloproteinase atroxlysin-1 (202 aa).

The 197-residue stretch at 6–202 (RYVDLFIVVD…ENPQCILNKR (197 aa)) folds into the Peptidase M12B domain. Residues D9 and D93 each contribute to the Ca(2+) site. Disulfide bonds link C117-C197, C157-C181, and C159-C164. H142 lines the Zn(2+) pocket. Residue E143 is part of the active site. Zn(2+) contacts are provided by H146 and H152. Residues C197 and N200 each contribute to the Ca(2+) site.

The protein belongs to the venom metalloproteinase (M12B) family. P-I subfamily. As to quaternary structure, monomer. Zn(2+) serves as cofactor. In terms of tissue distribution, expressed by the venom gland.

Its subcellular location is the secreted. Its activity is regulated as follows. Inhibited by EDTA, DTT and high concentrations of zinc ions (&gt;2 mM). Weakly inhibited by TLCK. Not inhibited by PMSF. Activated by calcium ions. Snake venom zinc metalloproteinase that acts on fibrinogen, fibrin, fibronectin (FN1), type I collagen, type IV collagen, integrin alpha-7/beta-1 (ITGA7/ITGB1) and integrin alpha-1/beta-1 (ITGA1/ITGB1). Binds to fibronectin (FN1), fibrinogen and, weakly, to type I collagen and laminin. Cleaves Xaa-Leu bonds. Inhibits ADP- and collagen-induced platelet aggregation both in the presence (IC(50)=1.4 uM for collagen) and in the absence (IC(50)=2.2 uM for collagen) of cofactors. Has hemorrhagic activity. The sequence is that of Snake venom metalloproteinase atroxlysin-1 from Bothrops atrox (Barba amarilla).